The following is a 356-amino-acid chain: Zinc finger CCCH domain-containing protein 49 (356 aa).

C3H1-type zinc fingers lie at residues 120 to 146 and 155 to 177; these read YSGTACPDFRKGGCKKGDSCEFAHGVF and YRTQPCKDGGNCLRKICFFAHSP. The segment at 209-235 is disordered; sequence ISPVSGSPPMSPRADSESSPMTQSLSR. Polar residues predominate over residues 225-235; sequence ESSPMTQSLSR.

This Arabidopsis thaliana (Mouse-ear cress) protein is Zinc finger CCCH domain-containing protein 49.